Consider the following 309-residue polypeptide: Serine/threonine-protein phosphatase CPPED1 (309 aa).

Residues tryptophan 47–glycine 250 form a catalytic region. Aspartate 51, aspartate 88, asparagine 125, and histidine 244 together coordinate a divalent metal cation.

It belongs to the metallophosphoesterase superfamily. CPPED1 family. Requires a divalent metal cation as cofactor.

The protein localises to the cytoplasm. It catalyses the reaction O-phospho-L-seryl-[protein] + H2O = L-seryl-[protein] + phosphate. It carries out the reaction O-phospho-L-threonyl-[protein] + H2O = L-threonyl-[protein] + phosphate. In terms of biological role, protein phosphatase involved in the dephosphorylation of AKT kinase family. The chain is Serine/threonine-protein phosphatase CPPED1 (cpped1) from Danio rerio (Zebrafish).